Consider the following 275-residue polypeptide: MSSTVEFDPQSRPTEADAYAQTSLPEVLPELVKQSLPKHVAIIMDGNGRWAQTQGKPRVMGHKAGVKAVRRAVSAASQLGIQSLTLFAFSSENWRRPDKEVSLLMELFFTVLQREIKLLDKNQVKLNIIGDISRFSARLQKQIRAAEEKTAGNSGLILNVAANYGGRWDILQAAQKLAEKVETGEMTSSQFTEEALSEHLCMQNQSEVDLIIRTGGDYRISNFVLWQAAYAELVFLDTLWPDFDEQAFHEAIATFANRQRRFGLTGSQIDEMRAL.

D45 is a catalytic residue. Residue D45 coordinates Mg(2+). Substrate contacts are provided by residues G46–R49, W50, R58, H62, and S90–E92. N93 acts as the Proton acceptor in catalysis. Substrate-binding positions include W94, R96, R213, and R219 to S221. E232 contacts Mg(2+).

It belongs to the UPP synthase family. As to quaternary structure, homodimer. Mg(2+) is required as a cofactor.

The enzyme catalyses 8 isopentenyl diphosphate + (2E,6E)-farnesyl diphosphate = di-trans,octa-cis-undecaprenyl diphosphate + 8 diphosphate. Functionally, catalyzes the sequential condensation of isopentenyl diphosphate (IPP) with (2E,6E)-farnesyl diphosphate (E,E-FPP) to yield (2Z,6Z,10Z,14Z,18Z,22Z,26Z,30Z,34E,38E)-undecaprenyl diphosphate (di-trans,octa-cis-UPP). UPP is the precursor of glycosyl carrier lipid in the biosynthesis of bacterial cell wall polysaccharide components such as peptidoglycan and lipopolysaccharide. This Shewanella oneidensis (strain ATCC 700550 / JCM 31522 / CIP 106686 / LMG 19005 / NCIMB 14063 / MR-1) protein is Ditrans,polycis-undecaprenyl-diphosphate synthase ((2E,6E)-farnesyl-diphosphate specific).